Consider the following 183-residue polypeptide: uncharacterized protein (183 aa).

A GGDEF domain is found at 55–183 (PRAAVLLVDL…RSRRGSRPAR (129 aa)).

Its function is as follows. Might be involved in pSAM2 replication control. This is an uncharacterized protein from Streptomyces ambofaciens.